Reading from the N-terminus, the 635-residue chain is Threonine--tRNA ligase (635 aa).

Residues 1-61 (MINISFPDGS…DNDCKLRILT (61 aa)) enclose the TGS domain. The segment at 242-533 (DHRKLGRELD…LIEEYAGRFP (292 aa)) is catalytic. Zn(2+)-binding residues include cysteine 333, histidine 384, and histidine 510.

It belongs to the class-II aminoacyl-tRNA synthetase family. Homodimer. Zn(2+) is required as a cofactor.

It localises to the cytoplasm. The catalysed reaction is tRNA(Thr) + L-threonine + ATP = L-threonyl-tRNA(Thr) + AMP + diphosphate + H(+). Functionally, catalyzes the attachment of threonine to tRNA(Thr) in a two-step reaction: L-threonine is first activated by ATP to form Thr-AMP and then transferred to the acceptor end of tRNA(Thr). Also edits incorrectly charged L-seryl-tRNA(Thr). This Rickettsia africae (strain ESF-5) protein is Threonine--tRNA ligase.